The chain runs to 216 residues: N-acetyltransferase 9-like protein (216 aa).

An N-acetyltransferase domain is found at 68 to 215 (VLLNENDEAK…DHVELELMRT (148 aa)).

This sequence belongs to the acetyltransferase family. GNAT subfamily.

It localises to the cytoplasm. It is found in the nucleus. This Schizosaccharomyces pombe (strain 972 / ATCC 24843) (Fission yeast) protein is N-acetyltransferase 9-like protein.